We begin with the raw amino-acid sequence, 327 residues long: Annexin A8 (327 aa).

Annexin repeat units follow at residues 21–92 (FNPD…ALMY), 93–164 (PPYR…CLLQ), 177–249 (GLAL…TVVK), and 253–324 (NLHS…SLVG). Ca(2+) contacts are provided by M266, G268, G270, and D310.

It belongs to the annexin family.

Functionally, this protein is an anticoagulant protein that acts as an indirect inhibitor of the thromboplastin-specific complex, which is involved in the blood coagulation cascade. The chain is Annexin A8 (ANXA8) from Pan troglodytes (Chimpanzee).